Consider the following 2629-residue polypeptide: Telomerase protein component 1 (2629 aa).

4 TEP1 N-terminal repeats span residues 1-30 (MEKL…DLQP), 31-60 (LEKI…DLQP), 61-90 (TERI…DLQP), and 91-120 (LEKL…TVKS). The TROVE domain occupies 227–685 (LKLTSGDSGF…VKHNLSPMPG (459 aa)). The segment covering 386–397 (PRKHRSKRRSRQ) has biased composition (basic residues). A disordered region spans residues 386–412 (PRKHRSKRRSRQPPRPQKTERPFSERG). Residues 402 to 412 (QKTERPFSERG) are compositionally biased toward basic and acidic residues. The NACHT domain maps to 1171 to 1578 (RLSLVTGQAG…EFLTNLHVVA (408 aa)). 1177–1184 (GQAGQGKT) contributes to the ATP binding site. WD repeat units follow at residues 1420–1462 (VLPQ…EVLA), 1681–1720 (TMSS…EEKA), 1723–1761 (SGCD…WVFQ), 1764–1803 (AHQY…LAFQ), 1805–1844 (THPK…VTKE), 1847–1886 (APGP…RLAA), 1889–1930 (AQCG…GCLG), 1932–1971 (LPLS…QGPQ), 1974–2013 (ELNV…HSLW), 2015–2054 (LSRY…QPHV), 2067–2106 (GHEG…APLL), 2113–2151 (CHRD…QLGQ), 2154–2191 (GHQS…LTSI), 2193–2241 (AHSG…QIRT), 2244–2282 (GHSG…DDSY), 2285–2324 (RSSV…ATAQ), 2326–2362 (PGRV…GSTS), 2375–2424 (EDWG…SSIL), 2467–2507 (PNGS…GEWI), 2555–2592 (IHLG…LLGL), and 2594–2628 (RCEG…FLSW).

As to quaternary structure, associated component of the telomerase holoenzyme complex. Component of the vault ribonucleoprotein particle, at least composed of MVP, PARP4 and one or more vault RNAs (vRNAs). Binds to VAULTRC1, VAULTRC2 and VAULTRC4/hvg4 vRNAs. In terms of tissue distribution, ubiquitous.

It localises to the nucleus. Its subcellular location is the chromosome. The protein localises to the telomere. Functionally, component of the telomerase ribonucleoprotein complex that is essential for the replication of chromosome termini. Also a component of the ribonucleoprotein vaults particle, a multi-subunit structure involved in nucleo-cytoplasmic transport. Responsible for the localizing and stabilizing vault RNA (vRNA) association in the vault ribonucleoprotein particle. This Mus musculus (Mouse) protein is Telomerase protein component 1 (Tep1).